The primary structure comprises 372 residues: DNA/RNA-binding protein ALBA4 (372 aa).

The protein belongs to the histone-like Alba family. Identified in a TARE6-associated complex consisting of over 30 proteins and including ALBA1, ALBA2 and ALBA4; the complex binds to the non-coding subtelomeric repeat region TARE6.

Its subcellular location is the nucleus. It localises to the chromosome. The protein localises to the telomere. It is found in the cytoplasm. Possesses DNA- and RNA-binding activities. Binds to DNA fragments longer than 14 base pairs with relaxed sequence specificity. Associates with the subtelomeric TARE6 repeats. Regulates the abundance of transcript sub-populations in a stage-specific manner. Regulates activation of male gametocytes. Participates in the coordination of sporozoite development in the oocyst. This is DNA/RNA-binding protein ALBA4 from Plasmodium falciparum (isolate 3D7).